A 206-amino-acid chain; its full sequence is Large ribosomal subunit protein uL4 (206 aa).

Over residues 42–54 (RRQQGTHQSQGRS) the composition is skewed to polar residues. The tract at residues 42–94 (RRQQGTHQSQGRSDVSRTGAKMFKQKGTGRARHSSARAPQFRGGGKAHGPVFR) is disordered. The span at 64–76 (FKQKGTGRARHSS) shows a compositional bias: basic residues.

The protein belongs to the universal ribosomal protein uL4 family. Part of the 50S ribosomal subunit.

In terms of biological role, one of the primary rRNA binding proteins, this protein initially binds near the 5'-end of the 23S rRNA. It is important during the early stages of 50S assembly. It makes multiple contacts with different domains of the 23S rRNA in the assembled 50S subunit and ribosome. Functionally, forms part of the polypeptide exit tunnel. The sequence is that of Large ribosomal subunit protein uL4 from Bartonella tribocorum (strain CIP 105476 / IBS 506).